Reading from the N-terminus, the 70-residue chain is Probable protein transport protein Sec61 subunit gamma (70 aa).

The Cytoplasmic segment spans residues 1-33 (MADNADDLFQIPKNFYKEGSHFIKRCVKPDRKE). A helical membrane pass occupies residues 34–62 (FLSISKAVATGFVLMGLIGYIIKLIHIPI). The Extracellular segment spans residues 63 to 70 (NKVLVGGA).

It belongs to the SecE/SEC61-gamma family. As to quaternary structure, heterotrimeric complex composed of SEC61-alpha, SEC61-beta and SEC61-gamma.

The protein localises to the endoplasmic reticulum membrane. Functionally, necessary for protein translocation in the endoplasmic reticulum. The sequence is that of Probable protein transport protein Sec61 subunit gamma (sss1) from Schizosaccharomyces pombe (strain 972 / ATCC 24843) (Fission yeast).